Reading from the N-terminus, the 248-residue chain is MACAEQDKLGQAFEDAFEVLRQHSTGDFQYSSDYKNYLAFINHRSHIRGNSNSYGVQPAEEPIYNWRTVINSATDLYFEGNIHQSLQNIPENQLVQPALLQQKGGKGRKKLRLFEYLHESLCNPEMASCIQWIDQTKGIFQFVSKNKEKLAQLWGKRKGNRKTMTYQKMARALRNYGRTGEIIKIRRKLTYQFSEAILQRLSAPYFLEKEIFYSQYVQPDQGYLSLNNWNANYNYTYANYHELSHPDC.

The segment at residues Leu-111–Ser-194 is a DNA-binding region (ETS).

Belongs to the ETS family. In terms of assembly, binds DNA as a monomer.

It localises to the nucleus. In terms of biological role, controls the development of red pulp macrophages required for red blood cells recycling and iron homeostasis. Transcription factor that binds to the PU-box, a purine-rich DNA sequence (5'-GAGGA[AT]-3') that can act as a lymphoid-specific enhancer. Regulates VCAM1 gene expression. This Bos taurus (Bovine) protein is Transcription factor Spi-C (SPIC).